A 499-amino-acid polypeptide reads, in one-letter code: GTPase Der (499 aa).

2 consecutive EngA-type G domains span residues 3–166 (PVVA…LETL) and 213–386 (IKFA…QSAT). GTP-binding positions include 9–16 (GRPNVGKS), 56–60 (DTGGI), 118–121 (NKTD), 219–226 (GRPNVGKS), 266–270 (DTAGV), and 331–334 (NKWD). Positions 387–471 (RRTSTAMLTR…PVRVEFQESA (85 aa)) constitute a KH-like domain.

This sequence belongs to the TRAFAC class TrmE-Era-EngA-EngB-Septin-like GTPase superfamily. EngA (Der) GTPase family. In terms of assembly, associates with the 50S ribosomal subunit.

Functionally, GTPase that plays an essential role in the late steps of ribosome biogenesis. The sequence is that of GTPase Der from Aeromonas hydrophila subsp. hydrophila (strain ATCC 7966 / DSM 30187 / BCRC 13018 / CCUG 14551 / JCM 1027 / KCTC 2358 / NCIMB 9240 / NCTC 8049).